The chain runs to 871 residues: Nonsense-mediated mRNA decay factor SMG8 (871 aa).

Residues 541–596 (LDDMELPESLQQSYTSSEDSSEDDDDFAIQTASSEDSLSGSDSYARPGSRRDEFES) are disordered. Over residues 573-583 (SSEDSLSGSDS) the composition is skewed to low complexity.

This sequence belongs to the SMG8 family.

Functionally, involved in nonsense-mediated decay (NMD) of mRNAs containing premature stop codons. Probable component of kinase complex containing smg-1 and recruited to stalled ribosomes. The polypeptide is Nonsense-mediated mRNA decay factor SMG8 (smg-8) (Caenorhabditis briggsae).